A 308-amino-acid polypeptide reads, in one-letter code: Folate transporter 1, chloroplastic (308 aa).

Solcar repeat units lie at residues 4–94 (SWQW…AKQR), 104–192 (LSPA…LRKI), and 213–299 (ADYA…VLKL). 6 helical membrane passes run 10–30 (ATAG…LDVV), 74–91 (VIGS…YGRA), 110–130 (LASA…IWLV), 164–184 (ALYK…IQFT), 216–236 (AALG…FQVI), and 274–293 (GLTA…FIVY).

The protein belongs to the mitochondrial carrier (TC 2.A.29) family. In terms of tissue distribution, ubiquitous.

It is found in the plastid. Its subcellular location is the chloroplast membrane. Mediates folate import into chloroplast. In Arabidopsis thaliana (Mouse-ear cress), this protein is Folate transporter 1, chloroplastic (FOLT1).